The sequence spans 135 residues: Global transcriptional regulator Spx 2 (135 aa).

Residue C10 is part of the active site.

The protein belongs to the ArsC family. Spx subfamily. As to quaternary structure, interacts with the C-terminal domain of the alpha subunit of the RNAP.

The protein resides in the cytoplasm. Global transcriptional regulator that plays a key role in stress response and exerts either positive or negative regulation of genes. Acts by interacting with the C-terminal domain of the alpha subunit of the RNA polymerase (RNAP). This interaction can enhance binding of RNAP to the promoter region of target genes and stimulate their transcription, or block interaction of RNAP with activator. This chain is Global transcriptional regulator Spx 2, found in Oceanobacillus iheyensis (strain DSM 14371 / CIP 107618 / JCM 11309 / KCTC 3954 / HTE831).